A 96-amino-acid polypeptide reads, in one-letter code: Dynein light chain roadblock-type 2 (96 aa).

Ala2 is modified (N-acetylalanine).

The protein belongs to the GAMAD family. As to quaternary structure, homodimer. The cytoplasmic dynein 1 complex consists of two catalytic heavy chains (HCs) and a number of non-catalytic subunits presented by intermediate chains (ICs), light intermediate chains (LICs) and light chains (LCs); the composition seems to vary in respect to the IC, LIC and LC composition. The heavy chain homodimer serves as a scaffold for the probable homodimeric assembly of the respective non-catalytic subunits. The ICs and LICs bind directly to the HC dimer and the LCs assemble on the IC dimer. Interacts with DYNC1I1 and DYNC1I2. Self-associates. Interacts with DYNLRB1.

The protein localises to the cytoplasm. It localises to the cytoskeleton. Its function is as follows. Acts as one of several non-catalytic accessory components of the cytoplasmic dynein 1 complex that are thought to be involved in linking dynein to cargos and to adapter proteins that regulate dynein function. Cytoplasmic dynein 1 acts as a motor for the intracellular retrograde motility of vesicles and organelles along microtubules. This Bos taurus (Bovine) protein is Dynein light chain roadblock-type 2 (DYNLRB2).